A 402-amino-acid polypeptide reads, in one-letter code: Enoyl-[acyl-carrier-protein] reductase [NADH] (402 aa).

NAD(+) is bound by residues 48 to 53 (GASSGY), 74 to 75 (FE), 111 to 112 (DA), and 140 to 141 (LA). Y226 lines the substrate pocket. Y236 (proton donor) is an active-site residue. Residues K245 and 274-276 (VVT) contribute to the NAD(+) site.

It belongs to the TER reductase family. As to quaternary structure, monomer.

The enzyme catalyses a 2,3-saturated acyl-[ACP] + NAD(+) = a (2E)-enoyl-[ACP] + NADH + H(+). It participates in lipid metabolism; fatty acid biosynthesis. In terms of biological role, involved in the final reduction of the elongation cycle of fatty acid synthesis (FAS II). Catalyzes the reduction of a carbon-carbon double bond in an enoyl moiety that is covalently linked to an acyl carrier protein (ACP). This chain is Enoyl-[acyl-carrier-protein] reductase [NADH], found in Xanthomonas campestris pv. campestris (strain 8004).